Reading from the N-terminus, the 596-residue chain is DNA primase (596 aa).

A CHC2-type zinc finger spans residues 41-65 (CPFHHEKTPSFSVSQDKQIYKCFGC). The 82-residue stretch at 255 to 336 (DTIIIVEGYM…DIKIIKIPDG (82 aa)) folds into the Toprim domain. Mg(2+)-binding residues include Glu-261, Asp-305, and Asp-307.

It belongs to the DnaG primase family. Monomer. Interacts with DnaB. Zn(2+) is required as a cofactor. It depends on Mg(2+) as a cofactor.

It carries out the reaction ssDNA + n NTP = ssDNA/pppN(pN)n-1 hybrid + (n-1) diphosphate.. Its function is as follows. RNA polymerase that catalyzes the synthesis of short RNA molecules used as primers for DNA polymerase during DNA replication. The sequence is that of DNA primase from Clostridium acetobutylicum (strain ATCC 824 / DSM 792 / JCM 1419 / IAM 19013 / LMG 5710 / NBRC 13948 / NRRL B-527 / VKM B-1787 / 2291 / W).